We begin with the raw amino-acid sequence, 515 residues long: Maturase K (515 aa).

The protein belongs to the intron maturase 2 family. MatK subfamily.

The protein resides in the plastid. The protein localises to the chloroplast. Functionally, usually encoded in the trnK tRNA gene intron. Probably assists in splicing its own and other chloroplast group II introns. This chain is Maturase K, found in Pinus halepensis (Aleppo pine).